The primary structure comprises 76 residues: Sec-independent protein translocase protein TatA (76 aa).

The helical transmembrane segment at 1-21 (MGSFSIWHWLIVLVIVALVFG) threads the bilayer. 2 stretches are compositionally biased toward basic and acidic residues: residues 39-50 (FKDGMKGEDDKP) and 64-76 (GTVD…KSNS). Positions 39–76 (FKDGMKGEDDKPAAQNAAPSQVADKGTVDVEVKEKSNS) are disordered.

This sequence belongs to the TatA/E family. The Tat system comprises two distinct complexes: a TatABC complex, containing multiple copies of TatA, TatB and TatC subunits, and a separate TatA complex, containing only TatA subunits. Substrates initially bind to the TatABC complex, which probably triggers association of the separate TatA complex to form the active translocon.

The protein resides in the cell inner membrane. Functionally, part of the twin-arginine translocation (Tat) system that transports large folded proteins containing a characteristic twin-arginine motif in their signal peptide across membranes. TatA could form the protein-conducting channel of the Tat system. The chain is Sec-independent protein translocase protein TatA from Herminiimonas arsenicoxydans.